A 393-amino-acid polypeptide reads, in one-letter code: MLSAAMEYLRSCWGPASSPAGRPRKGSDAAGRQDGLLWYKDAGQLVAGEFSMAVVQANNLLEDHSQVESGPLSTTDPNLQGTLVGVYDGHGGPETARYINDHLFNHLRGFASEHKCMSADVIRKAFRATEEGFFSVVSSQWSMRPQLAAVGSCCLVGVICAGNLYIANLGDSRAVLGRLVKGTGEVLAMQLSAEHNASFEEVRRELQAAHPDDPHIVVLKHNVWRVKGIIQITRSIGDVYLKKPEFNREPLHSKFRLQETFRRPLLSSEPAIVVHQLQTTDQFIIFASDGLWEHISNQEAVDLVQHNPRNGIARRLVKAAMQQAAKKREMRYSDLKKIDRGVRRHFHDDITVVVVFFDSNAITTANWSRPSVSLRGGGVTLPANSLAPFSVPT.

The PPM-type phosphatase domain maps to 49 to 357 (EFSMAVVQAN…DDITVVVVFF (309 aa)). Mn(2+) is bound by residues D88 and G89. Residues 147 to 167 (LAAVGSCCLVGVICAGNLYIA) form a helical membrane-spanning segment. Mn(2+)-binding residues include D289 and D348.

The protein belongs to the PP2C family. Requires Mg(2+) as cofactor. It depends on Mn(2+) as a cofactor.

The protein localises to the membrane. The enzyme catalyses O-phospho-L-seryl-[protein] + H2O = L-seryl-[protein] + phosphate. It catalyses the reaction O-phospho-L-threonyl-[protein] + H2O = L-threonyl-[protein] + phosphate. In Oryza sativa subsp. japonica (Rice), this protein is Probable protein phosphatase 2C 72.